Consider the following 297-residue polypeptide: 4-hydroxy-tetrahydrodipicolinate synthase (297 aa).

T50 is a binding site for pyruvate. Y138 functions as the Proton donor/acceptor in the catalytic mechanism. K166 functions as the Schiff-base intermediate with substrate in the catalytic mechanism. Position 208 (I208) interacts with pyruvate.

The protein belongs to the DapA family. In terms of assembly, homotetramer; dimer of dimers.

It is found in the cytoplasm. The enzyme catalyses L-aspartate 4-semialdehyde + pyruvate = (2S,4S)-4-hydroxy-2,3,4,5-tetrahydrodipicolinate + H2O + H(+). It functions in the pathway amino-acid biosynthesis; L-lysine biosynthesis via DAP pathway; (S)-tetrahydrodipicolinate from L-aspartate: step 3/4. Catalyzes the condensation of (S)-aspartate-beta-semialdehyde [(S)-ASA] and pyruvate to 4-hydroxy-tetrahydrodipicolinate (HTPA). This is 4-hydroxy-tetrahydrodipicolinate synthase from Gluconobacter oxydans (strain 621H) (Gluconobacter suboxydans).